Here is a 166-residue protein sequence, read N- to C-terminus: PTS system glucose-specific EIIA component (166 aa).

In terms of domain architecture, PTS EIIA type-1 spans 34-138; it reads DPVFAQKMMG…SVISPIIITN (105 aa). Zn(2+)-binding residues include histidine 71 and histidine 86. Histidine 86 acts as the Tele-phosphohistidine intermediate; for EIIA activity in catalysis. Histidine 86 is subject to Phosphohistidine; by HPr.

Heterodimer with glycerol kinase (glpk). The cofactor is Zn(2+).

It localises to the cytoplasm. Functionally, the phosphoenolpyruvate-dependent sugar phosphotransferase system (sugar PTS), a major carbohydrate active transport system, catalyzes the phosphorylation of incoming sugar substrates concomitantly with their translocation across the cell membrane. The enzyme II complex composed of PtsG and Crr is involved in glucose transport. The chain is PTS system glucose-specific EIIA component (crr) from Staphylococcus aureus (strain COL).